The chain runs to 95 residues: Small ribosomal subunit protein bS20 (95 aa).

The protein belongs to the bacterial ribosomal protein bS20 family.

Its function is as follows. Binds directly to 16S ribosomal RNA. This Fervidobacterium nodosum (strain ATCC 35602 / DSM 5306 / Rt17-B1) protein is Small ribosomal subunit protein bS20.